Reading from the N-terminus, the 47-residue chain is Large ribosomal subunit protein bL36A (47 aa).

It belongs to the bacterial ribosomal protein bL36 family.

The sequence is that of Large ribosomal subunit protein bL36A from Yersinia enterocolitica serotype O:8 / biotype 1B (strain NCTC 13174 / 8081).